Reading from the N-terminus, the 119-residue chain is Large ribosomal subunit protein uL18 (119 aa).

It belongs to the universal ribosomal protein uL18 family. As to quaternary structure, part of the 50S ribosomal subunit; part of the 5S rRNA/L5/L18/L25 subcomplex. Contacts the 5S and 23S rRNAs.

Its function is as follows. This is one of the proteins that bind and probably mediate the attachment of the 5S RNA into the large ribosomal subunit, where it forms part of the central protuberance. This Nitrosomonas europaea (strain ATCC 19718 / CIP 103999 / KCTC 2705 / NBRC 14298) protein is Large ribosomal subunit protein uL18.